The chain runs to 330 residues: G-protein coupled receptor 157 (330 aa).

The Extracellular portion of the chain corresponds to 1-15; that stretch reads MPTPAPPTELLPWER. The chain crosses the membrane as a helical span at residues 16 to 36; sequence AVVLLSCVLSALGSGLLVATH. Residues 37–48 are Cytoplasmic-facing; sequence ALWPDLRSRARR. A helical membrane pass occupies residues 49–69; it reads LLLFLSLADLLSAASYFYGVL. The Extracellular portion of the chain corresponds to 70 to 87; that stretch reads QDFAGTSWDCVLQGALST. A helical membrane pass occupies residues 88–108; that stretch reads FANTSSFFWTVAIALYLYLNI. At 109 to 119 the chain is on the cytoplasmic side; that stretch reads VRATRGPCTDH. Residues 120–140 form a helical membrane-spanning segment; the sequence is LVWAFHLISWGVPLAITVAAV. Residues 141-166 are Extracellular-facing; sequence CLKKIGYDASDVSVGWCWINLEAEDR. The chain crosses the membrane as a helical span at residues 167 to 187; that stretch reads VLWMLLTGKLWEMLAYILLPL. Residues 188–227 lie on the Cytoplasmic side of the membrane; that stretch reads LYLLVRKHINRAHQALSEYRPIWEGRQLQRGSPTSMADKK. Residues 228–250 form a helical membrane-spanning segment; it reads LILIPFIFICLRVWSTVRFVLTL. Topologically, residues 251 to 259 are extracellular; it reads CGSPVVQAP. The helical transmembrane segment at 260-282 threads the bilayer; sequence VLVVLHGIGNTFQGGANCIMFVL. Over 283–330 the chain is Cytoplasmic; that stretch reads CTRAVRTRLFSLCCCYPRPPTQNPPGASIPPKMGESQESRRTPEVPST. A disordered region spans residues 303-330; the sequence is TQNPPGASIPPKMGESQESRRTPEVPST. Residues 317 to 330 show a composition bias toward basic and acidic residues; the sequence is ESQESRRTPEVPST.

This sequence belongs to the G-protein coupled receptor 2 family.

The protein localises to the cell projection. It localises to the cilium membrane. Orphan receptor that promotes neuronal differentiation of radial glial progenitors (RGPs). The activity of this receptor is mediated by a G(q)-protein that activates a phosphatidylinositol-calcium second messenger. This is G-protein coupled receptor 157 (Gpr157) from Rattus norvegicus (Rat).